A 428-amino-acid chain; its full sequence is Dihydroorotase (428 aa).

Residues H59 and H61 each contribute to the Zn(2+) site. Substrate is bound by residues 61–63 and N93; that span reads HFR. 3 residues coordinate Zn(2+): D151, H178, and H231. N277 is a substrate binding site. A Zn(2+)-binding site is contributed by D304. The active site involves D304. Substrate contacts are provided by residues H308 and 322–323; that span reads FG.

It belongs to the metallo-dependent hydrolases superfamily. DHOase family. Class I DHOase subfamily. In terms of assembly, homodimer. The cofactor is Zn(2+).

The enzyme catalyses (S)-dihydroorotate + H2O = N-carbamoyl-L-aspartate + H(+). It functions in the pathway pyrimidine metabolism; UMP biosynthesis via de novo pathway; (S)-dihydroorotate from bicarbonate: step 3/3. Functionally, catalyzes the reversible cyclization of carbamoyl aspartate to dihydroorotate. The protein is Dihydroorotase of Bacillus subtilis (strain 168).